A 361-amino-acid chain; its full sequence is Chorismate synthase (361 aa).

NADP(+)-binding residues include R48 and R54. FMN is bound by residues 125–127 (RSS), 238–239 (NA), G278, 293–297 (KPTSS), and R319.

It belongs to the chorismate synthase family. Homotetramer. FMNH2 serves as cofactor.

It carries out the reaction 5-O-(1-carboxyvinyl)-3-phosphoshikimate = chorismate + phosphate. The protein operates within metabolic intermediate biosynthesis; chorismate biosynthesis; chorismate from D-erythrose 4-phosphate and phosphoenolpyruvate: step 7/7. Catalyzes the anti-1,4-elimination of the C-3 phosphate and the C-6 proR hydrogen from 5-enolpyruvylshikimate-3-phosphate (EPSP) to yield chorismate, which is the branch point compound that serves as the starting substrate for the three terminal pathways of aromatic amino acid biosynthesis. This reaction introduces a second double bond into the aromatic ring system. This is Chorismate synthase from Yersinia pseudotuberculosis serotype IB (strain PB1/+).